Reading from the N-terminus, the 72-residue chain is Translation initiation factor IF-1 (72 aa).

Residues 1–72 form the S1-like domain; the sequence is MSKQDVIEVE…TRGRIVYRYK (72 aa).

The protein belongs to the IF-1 family. As to quaternary structure, component of the 30S ribosomal translation pre-initiation complex which assembles on the 30S ribosome in the order IF-2 and IF-3, IF-1 and N-formylmethionyl-tRNA(fMet); mRNA recruitment can occur at any time during PIC assembly.

It is found in the cytoplasm. One of the essential components for the initiation of protein synthesis. Stabilizes the binding of IF-2 and IF-3 on the 30S subunit to which N-formylmethionyl-tRNA(fMet) subsequently binds. Helps modulate mRNA selection, yielding the 30S pre-initiation complex (PIC). Upon addition of the 50S ribosomal subunit IF-1, IF-2 and IF-3 are released leaving the mature 70S translation initiation complex. This chain is Translation initiation factor IF-1, found in Pelotomaculum thermopropionicum (strain DSM 13744 / JCM 10971 / SI).